The chain runs to 474 residues: tRNA-2-methylthio-N(6)-dimethylallyladenosine synthase (474 aa).

The 118-residue stretch at 3–120 (KKLHIKTWGC…LPEMINSVRG (118 aa)) folds into the MTTase N-terminal domain. [4Fe-4S] cluster contacts are provided by Cys-12, Cys-49, Cys-83, Cys-157, Cys-161, and Cys-164. One can recognise a Radical SAM core domain in the interval 143-375 (RADGPTAFVS…QDRINQQTTA (233 aa)). The TRAM domain occupies 378 to 441 (RRKLGTVQRI…ANSLRGMLLR (64 aa)).

This sequence belongs to the methylthiotransferase family. MiaB subfamily. In terms of assembly, monomer. It depends on [4Fe-4S] cluster as a cofactor.

It localises to the cytoplasm. It carries out the reaction N(6)-dimethylallyladenosine(37) in tRNA + (sulfur carrier)-SH + AH2 + 2 S-adenosyl-L-methionine = 2-methylsulfanyl-N(6)-dimethylallyladenosine(37) in tRNA + (sulfur carrier)-H + 5'-deoxyadenosine + L-methionine + A + S-adenosyl-L-homocysteine + 2 H(+). Catalyzes the methylthiolation of N6-(dimethylallyl)adenosine (i(6)A), leading to the formation of 2-methylthio-N6-(dimethylallyl)adenosine (ms(2)i(6)A) at position 37 in tRNAs that read codons beginning with uridine. This Erwinia tasmaniensis (strain DSM 17950 / CFBP 7177 / CIP 109463 / NCPPB 4357 / Et1/99) protein is tRNA-2-methylthio-N(6)-dimethylallyladenosine synthase.